The chain runs to 683 residues: Zinc finger protein 418 (683 aa).

Residues 48-123 (VTIEDVTVYF…TPKQGQLRQK (76 aa)) enclose the KRAB domain. Polar residues predominate over residues 102–120 (QSLSQTEAPQVRTPKQGQL). 2 disordered regions span residues 102–124 (QSLS…RQKP) and 209–247 (DIPN…QHRL). Over residues 225-239 (FHRDKNNSESDEYKK) the composition is skewed to basic and acidic residues. C2H2-type zinc fingers lie at residues 287–309 (YECH…QRRH), 315–337 (YKCG…CRVH), 343–365 (FECL…QRTH), 371–393 (YECS…QRTH), 399–421 (YECG…QRVH), 427–449 (YHCE…SKIH), 455–477 (YECG…QRTH), 483–505 (YECR…RRIH), 511–533 (YECE…QRVH), 539–561 (YKCE…QRTH), 567–589 (YECA…QKIH), 595–617 (YHCD…QRVH), 623–645 (YTCG…RRIH), and 651–673 (YECD…QLLH).

Belongs to the krueppel C2H2-type zinc-finger protein family.

The protein localises to the nucleus. Its function is as follows. Transcriptional repressor. May play a role as regulator of the ubiquitin-proteasome system and autophagy-lysosomal pathway. The chain is Zinc finger protein 418 from Rattus norvegicus (Rat).